We begin with the raw amino-acid sequence, 190 residues long: uncharacterized protein (190 aa).

Disordered stretches follow at residues 1 to 21 (MALR…ATVG) and 155 to 190 (PEMG…TQAS). The segment covering 181–190 (SPSSHPTQAS) has biased composition (low complexity).

This is an uncharacterized protein from Homo sapiens (Human).